A 401-amino-acid polypeptide reads, in one-letter code: Glucose-6-phosphate isomerase (401 aa).

Glu-261 acts as the Proton donor in catalysis. Catalysis depends on residues His-282 and Lys-392.

This sequence belongs to the GPI family. In terms of assembly, homodimer.

It is found in the cytoplasm. It catalyses the reaction alpha-D-glucose 6-phosphate = beta-D-fructose 6-phosphate. It functions in the pathway carbohydrate biosynthesis; gluconeogenesis. Its pathway is carbohydrate degradation; glycolysis; D-glyceraldehyde 3-phosphate and glycerone phosphate from D-glucose: step 2/4. Its activity is regulated as follows. Competively inhibited by 6-phosphogluconate and erythrose 4-phosphate. Catalyzes the isomerization of glucose-6-P to fructose-6-P. The polypeptide is Glucose-6-phosphate isomerase (Methanocaldococcus jannaschii (strain ATCC 43067 / DSM 2661 / JAL-1 / JCM 10045 / NBRC 100440) (Methanococcus jannaschii)).